Consider the following 362-residue polypeptide: MAGSSIGQLFKVTTFGESHGAAIGCIVDGIPPNLEICEADLQHDLDRRRPGQSRYTTMRQEKDQVKILSGVFEGKTTGSSIGLMIENTDQRSKDYSEIKDLFRPGHADYTYHQKFGHRDYRGGGRSSARETAMRVAAGAIAKKYLNEQFGIVIRGYLSQLGDIKADSIDLDEVENNPFFFPDLSKITQLEDYMKALIKEGNSVGAKVTVVASSVPVGLGEPVFDRLDAELAHSLMSINAVKGVEIGDGFAAVSQKGTEHRDEMTPGGFLSNHAGGILGGISTGQDIIAHIALKPTSSLTIPGRTITTNGEATTMITKGRHDPCVGIRAVPIAEAQMAITLLDHLLRHRAQNLHVTTNTPFIK.

Residues Arg48 and Arg54 each contribute to the NADP(+) site. Residues 125 to 127, 238 to 239, Gly278, 293 to 297, and Arg319 each bind FMN; these read RSS, NA, and KPTSS.

The protein belongs to the chorismate synthase family. Homotetramer. Requires FMNH2 as cofactor.

The enzyme catalyses 5-O-(1-carboxyvinyl)-3-phosphoshikimate = chorismate + phosphate. It participates in metabolic intermediate biosynthesis; chorismate biosynthesis; chorismate from D-erythrose 4-phosphate and phosphoenolpyruvate: step 7/7. Its function is as follows. Catalyzes the anti-1,4-elimination of the C-3 phosphate and the C-6 proR hydrogen from 5-enolpyruvylshikimate-3-phosphate (EPSP) to yield chorismate, which is the branch point compound that serves as the starting substrate for the three terminal pathways of aromatic amino acid biosynthesis. This reaction introduces a second double bond into the aromatic ring system. The polypeptide is Chorismate synthase (Psychromonas ingrahamii (strain DSM 17664 / CCUG 51855 / 37)).